A 394-amino-acid polypeptide reads, in one-letter code: Magnesium transporter MRS2-2 (394 aa).

Residues 115–145 (PVGNASHNGGQGDGKEIAGAQNDGDTGDEDE) are disordered. 2 helical membrane passes run 329–349 (LVLSSGTVCLSMYSLVAGIFG) and 366–386 (YVVGLTGTLCVVVFVIIMSYA). The Required for magnesium transport activity signature appears at 349–351 (GMN).

The protein belongs to the CorA metal ion transporter (MIT) (TC 1.A.35.5) family. In terms of tissue distribution, expressed in the whole plant but preferentially in the mature anthers.

It localises to the membrane. Low-affinity magnesium transporter that mediates the influx of magnesium. Plays a crucial role in male gametophyte development and male fertility. This Arabidopsis thaliana (Mouse-ear cress) protein is Magnesium transporter MRS2-2 (MRS2-2).